A 418-amino-acid polypeptide reads, in one-letter code: Neurotensin receptor type 1 (418 aa).

Residues Met-1 to Thr-67 are Extracellular-facing. Residues Asn-4, Asn-37, and Asn-41 are each glycosylated (N-linked (GlcNAc...) asparagine). Residues Ala-68–Leu-88 form a helical membrane-spanning segment. Residues Ala-89–His-102 are Cytoplasmic-facing. Residues Tyr-103–Val-122 form a helical membrane-spanning segment. Over Glu-123–Arg-142 the chain is Extracellular. Residues Cys-141 and Cys-224 are joined by a disulfide bond. Residues Gly-143–Val-164 traverse the membrane as a helical segment. Topologically, residues Glu-165–Arg-184 are cytoplasmic. A helical membrane pass occupies residues Thr-185–Phe-205. Topologically, residues Thr-206–Lys-234 are extracellular. A helical membrane pass occupies residues Val-235 to Ile-259. Residues Ala-260–Arg-303 lie on the Cytoplasmic side of the membrane. The chain crosses the membrane as a helical span at residues Val-304–Met-325. Residues Val-321–Tyr-344 are neurotensin binding. Topologically, residues Phe-326 to His-343 are extracellular. The chain crosses the membrane as a helical span at residues Tyr-344–Tyr-364. Over Asn-365–Tyr-418 the chain is Cytoplasmic. Residues Cys-381 and Cys-383 are each lipidated (S-palmitoyl cysteine).

This sequence belongs to the G-protein coupled receptor 1 family. Neurotensin receptor subfamily. NTSR1 sub-subfamily. In terms of assembly, interacts (palmitoylated form) with GNA11. Post-translationally, N-glycosylated. In terms of processing, palmitoylated; this is required for normal localization at membrane rafts and normal GNA11-mediated activation of down-stream signaling cascades. The palmitoylation level increases in response to neurotensin treatment. In terms of tissue distribution, expressed in prostate (at protein level). Detected in colon and peripheral blood mononuclear cells. Detected at very low levels in brain.

The protein resides in the cell membrane. The protein localises to the membrane raft. G-protein coupled receptor for the tridecapeptide neurotensin (NTS). Signaling is effected via G proteins that activate a phosphatidylinositol-calcium second messenger system. Signaling leads to the activation of downstream MAP kinases and protects cells against apoptosis. The chain is Neurotensin receptor type 1 (NTSR1) from Homo sapiens (Human).